The following is a 413-amino-acid chain: Tyrosine--tRNA ligase (413 aa).

The 'HIGH' region signature appears at 60 to 69; the sequence is PTAPDIHIGH. Positions 244 to 248 match the 'KMSKS' region motif; sequence KMSKS. ATP is bound at residue lysine 247. Residues 352 to 412 form the S4 RNA-binding domain; the sequence is LGIAQLLKQA…GKRRFARVTL (61 aa).

The protein belongs to the class-I aminoacyl-tRNA synthetase family. TyrS type 2 subfamily. In terms of assembly, homodimer.

It localises to the cytoplasm. It carries out the reaction tRNA(Tyr) + L-tyrosine + ATP = L-tyrosyl-tRNA(Tyr) + AMP + diphosphate + H(+). Its function is as follows. Catalyzes the attachment of tyrosine to tRNA(Tyr) in a two-step reaction: tyrosine is first activated by ATP to form Tyr-AMP and then transferred to the acceptor end of tRNA(Tyr). The sequence is that of Tyrosine--tRNA ligase from Cupriavidus pinatubonensis (strain JMP 134 / LMG 1197) (Cupriavidus necator (strain JMP 134)).